Here is a 229-residue protein sequence, read N- to C-terminus: Ribonuclease 3 (229 aa).

Positions 5–127 constitute an RNase III domain; it reads LDRLERKLGY…LIGAIYQDAD (123 aa). Mg(2+) is bound at residue Glu-40. Asp-44 is an active-site residue. Residues Asp-113 and Glu-116 each contribute to the Mg(2+) site. Glu-116 is an active-site residue. Residues 154 to 224 enclose the DRBM domain; it reads DPKTRLQEFL…AAAALIALGV (71 aa).

This sequence belongs to the ribonuclease III family. In terms of assembly, homodimer. Requires Mg(2+) as cofactor.

Its subcellular location is the cytoplasm. It catalyses the reaction Endonucleolytic cleavage to 5'-phosphomonoester.. Digests double-stranded RNA. Involved in the processing of primary rRNA transcript to yield the immediate precursors to the large and small rRNAs (23S and 16S). Processes some mRNAs, and tRNAs when they are encoded in the rRNA operon. Processes pre-crRNA and tracrRNA of type II CRISPR loci if present in the organism. The sequence is that of Ribonuclease 3 from Pseudomonas entomophila (strain L48).